The chain runs to 118 residues: Large ribosomal subunit protein bL17 (118 aa).

Belongs to the bacterial ribosomal protein bL17 family. As to quaternary structure, part of the 50S ribosomal subunit. Contacts protein L32.

In Campylobacter fetus subsp. fetus (strain 82-40), this protein is Large ribosomal subunit protein bL17.